Reading from the N-terminus, the 523-residue chain is MSTDHIRRPIRRALISVYDKTGLVDLAQGLTAAGVEIVSTGSTAKTIASKGIPVTRVEELTGFPEVLDGRVKTLHPRVHAGLLADLRNPEHEAALAELGVEAFELVVVNLYPFSQTVESGASVDECVEQIDIGGPSMVRAAAKNHPSVAVVTDPQGYDGVLAAVSSGGFTLAERKKLASLAFQHTAEYDIAVASWMQSTVAPEQPETDFPRWFGRNWRRQAMLRYGENPHQQAALYADPGAWPGLAQAEQLHGKEMSYNNFTDADAAWRAAFDHEQKCVAIIKHANPCGIAISEVSVADAHRKAHACDPLSAYGGVIACNTEVSPEMAEYVSTIFTEVIVAPAYAPAALDQLTKKKNIRVLVASEPQDGGAELRPISGGLLMQQRDQLDAAGDNPANWTLATGSPADPATLTDLVFAWRSCRAVKSNAIVIVADGATIGVGMGQVNRVDAARLAVERGGERVNGAVAASDAFFPFPDGLETLTAAGVKAIVHPGGSVRDEEVTAAAAKAGITLYLTGSRHFAH.

Residues 4–152 (DHIRRPIRRA…KNHPSVAVVT (149 aa)) enclose the MGS-like domain.

This sequence belongs to the PurH family.

The enzyme catalyses (6R)-10-formyltetrahydrofolate + 5-amino-1-(5-phospho-beta-D-ribosyl)imidazole-4-carboxamide = 5-formamido-1-(5-phospho-D-ribosyl)imidazole-4-carboxamide + (6S)-5,6,7,8-tetrahydrofolate. It carries out the reaction IMP + H2O = 5-formamido-1-(5-phospho-D-ribosyl)imidazole-4-carboxamide. Its pathway is purine metabolism; IMP biosynthesis via de novo pathway; 5-formamido-1-(5-phospho-D-ribosyl)imidazole-4-carboxamide from 5-amino-1-(5-phospho-D-ribosyl)imidazole-4-carboxamide (10-formyl THF route): step 1/1. It participates in purine metabolism; IMP biosynthesis via de novo pathway; IMP from 5-formamido-1-(5-phospho-D-ribosyl)imidazole-4-carboxamide: step 1/1. The protein is Bifunctional purine biosynthesis protein PurH of Mycobacterium marinum (strain ATCC BAA-535 / M).